A 402-amino-acid polypeptide reads, in one-letter code: N-acetyltransferase Eis (402 aa).

The 152-residue stretch at 3–154 folds into the N-acetyltransferase domain; sequence VTLCSPTEDD…RFARFHADAP (152 aa). Residues 85 to 87, 93 to 98, and 121 to 122 each bind acetyl-CoA; these read VAV, RRGLLR, and SE. Tyrosine 126 serves as the catalytic Proton donor. Phenylalanine 402 functions as the Proton acceptor; via carboxylate in the catalytic mechanism.

The protein belongs to the acetyltransferase Eis family. As to quaternary structure, homohexamer; trimer of dimers.

It is found in the secreted. The protein resides in the host cytoplasmic vesicle. The protein localises to the host phagosome. Its subcellular location is the extracellular vesicle. It localises to the bacterial extracellular vesicle. It is found in the host extracellular space. The enzyme catalyses L-lysyl-[protein] + acetyl-CoA = N(6)-acetyl-L-lysyl-[protein] + CoA + H(+). Functionally, effector that is released into the host cell and affects host immune responses. Acts as an acetyltransferase that acetylates lysine residues of host proteins. This Mycobacterium bovis (strain BCG / Pasteur 1173P2) protein is N-acetyltransferase Eis.